Here is a 247-residue protein sequence, read N- to C-terminus: 3-deoxy-manno-octulosonate cytidylyltransferase (247 aa).

This sequence belongs to the KdsB family.

It localises to the cytoplasm. The enzyme catalyses 3-deoxy-alpha-D-manno-oct-2-ulosonate + CTP = CMP-3-deoxy-beta-D-manno-octulosonate + diphosphate. Its pathway is nucleotide-sugar biosynthesis; CMP-3-deoxy-D-manno-octulosonate biosynthesis; CMP-3-deoxy-D-manno-octulosonate from 3-deoxy-D-manno-octulosonate and CTP: step 1/1. The protein operates within bacterial outer membrane biogenesis; lipopolysaccharide biosynthesis. Activates KDO (a required 8-carbon sugar) for incorporation into bacterial lipopolysaccharide in Gram-negative bacteria. This Chlorobium phaeovibrioides (strain DSM 265 / 1930) (Prosthecochloris vibrioformis (strain DSM 265)) protein is 3-deoxy-manno-octulosonate cytidylyltransferase.